A 469-amino-acid chain; its full sequence is Ectonucleoside triphosphate diphosphohydrolase 5 (469 aa).

The signal sequence occupies residues 1-24; it reads MATPWGAVFFLLMIACAGSTVFYR. The active-site Proton acceptor is glutamate 172. Residue asparagine 232 is glycosylated (N-linked (GlcNAc...) asparagine). 2 disulfides stabilise this stretch: cysteine 272-cysteine 303 and cysteine 363-cysteine 377.

The protein belongs to the GDA1/CD39 NTPase family. Monomer; active form. Homodimer; disulfide-linked. Homodimers are enzymatically inactive. It depends on Ca(2+) as a cofactor. Mg(2+) is required as a cofactor. N-glycosylated; high-mannose type. Expressed in fetal cells and most adult tissues.

Its subcellular location is the endoplasmic reticulum. The protein localises to the secreted. The catalysed reaction is a ribonucleoside 5'-diphosphate + H2O = a ribonucleoside 5'-phosphate + phosphate + H(+). It catalyses the reaction GDP + H2O = GMP + phosphate + H(+). It carries out the reaction UDP + H2O = UMP + phosphate + H(+). The enzyme catalyses IDP + H2O = IMP + phosphate + H(+). The catalysed reaction is CDP + H2O = CMP + phosphate + H(+). It catalyses the reaction ADP + H2O = AMP + phosphate + H(+). It functions in the pathway protein modification; protein glycosylation. Its function is as follows. Hydrolyzes nucleoside diphosphates with a preference for GDP, IDP and UDP compared to ADP and CDP. In the lumen of the endoplasmic reticulum, hydrolyzes UDP that acts as an end-product feedback inhibitor of the UDP-Glc:glycoprotein glucosyltransferases. UMP can be transported back by an UDP-sugar antiporter to the cytosol where it is consumed to regenerate UDP-glucose. Therefore, it positively regulates protein reglucosylation by clearing UDP from the ER lumen and by promoting the regeneration of UDP-glucose. Protein reglucosylation is essential to proper glycoprotein folding and quality control in the ER. The sequence is that of Ectonucleoside triphosphate diphosphohydrolase 5 (ENTPD5) from Mesocricetus auratus (Golden hamster).